Reading from the N-terminus, the 602-residue chain is MASSPKTNALSSSDSANATTWQNFKRLVSYAKPYKLGFVAAIIGMLGYAAIDVYFLSQLKPLVDEGLSGANANFMKWAPLFIIVAFTVRGIAHFIANYCLAWVGNNVVADLRQKLFEHIMSMPVAFHDQTSTGSLISKITFDTEQVLNSVSKSILTIVQQSAFIIGLLGLMFYYSWQLSLIFLLITPIIAVIVSVVSKRFRKVSKNIQGAMGEVTTAAEQTFNGHKVVLTFGGQQREFSRFAKINKHNRQQRMKMRATKSASVPIIQVIASFALAFVFYAITSDSLRDSISPGTFVSIITYMTMLLRPLKMLTNVNSEFQQGMAACTSIFSILDHEKEKDNGDKQLERASGTLSFKHVDFSYKNTNTMTTSDKEQDTKLALNDITFDLAPGETLALVGRSGSGKSTASSLLLRFYDATRGEILIDDTNIEQFQLKDLRKQFSYVSQQVVLFNDTLANNIAYGKPEATEAEIIEAAKSAHVMEFAEHMEQGLETNIGENGALLSGGQRQRVAIARALLCDTPFLILDEATSALDTESERHIQDALQTLQQNRTSIVIAHRLSTIENADKIIVMEQGKIVEQGNHQSLLAKQGAYAQLHSFQFE.

5 helical membrane passes run 36-56, 80-100, 154-174, 176-196, and 261-281; these read LGFV…VYFL, LFII…NYCL, ILTI…MFYY, WQLS…VSVV, and ASVP…FYAI. Positions 39-321 constitute an ABC transmembrane type-1 domain; it reads VAAIIGMLGY…LTNVNSEFQQ (283 aa). The ABC transporter domain maps to 362 to 599; it reads YKNTNTMTTS…QGAYAQLHSF (238 aa). Residue 398–405 coordinates ATP; that stretch reads GRSGSGKS.

This sequence belongs to the ABC transporter superfamily. Lipid exporter (TC 3.A.1.106) family. Homodimer.

Its subcellular location is the cell inner membrane. It catalyses the reaction ATP + H2O + lipid A-core oligosaccharideSide 1 = ADP + phosphate + lipid A-core oligosaccharideSide 2.. Functionally, involved in lipopolysaccharide (LPS) biosynthesis. Translocates lipid A-core from the inner to the outer leaflet of the inner membrane. Transmembrane domains (TMD) form a pore in the inner membrane and the ATP-binding domain (NBD) is responsible for energy generation. The chain is ATP-dependent lipid A-core flippase 1 from Colwellia psychrerythraea (strain 34H / ATCC BAA-681) (Vibrio psychroerythus).